A 114-amino-acid polypeptide reads, in one-letter code: Fumarate reductase subunit D (114 aa).

A run of 3 helical transmembrane segments spans residues 27 to 47, 50 to 70, and 94 to 114; these read ICFP…LIPM, IIVF…TIFP, and WLFY…VIAL.

The protein belongs to the FrdD family. In terms of assembly, part of an enzyme complex containing four subunits: a flavoprotein (FrdA), an iron-sulfur protein (FrdB), and two hydrophobic anchor proteins (FrdC and FrdD).

It is found in the cell inner membrane. Its function is as follows. Anchors the catalytic components of the fumarate reductase complex to the cell membrane, binds quinones. This is Fumarate reductase subunit D from Haemophilus ducreyi (strain 35000HP / ATCC 700724).